We begin with the raw amino-acid sequence, 861 residues long: Actin-binding LIM protein 1 (861 aa).

4 LIM zinc-binding domains span residues 97-156 (IHCH…MYGT), 156-216 (TRCH…MSSS), 224-283 (SNCA…LFGV), and 283-343 (VKCE…TKTE). A Phosphoserine modification is found at Ser-216. Residues 374-414 (LQLLSPPCLTNSNKNPRQPTRTSSESIYSRPGSSIPGSPGH) form a disordered region. Polar residues predominate over residues 381-400 (CLTNSNKNPRQPTRTSSESI). Residues 404-413 (PGSSIPGSPG) show a composition bias toward low complexity. Ser-411 bears the Phosphoserine mark. A phosphotyrosine mark is found at Tyr-417 and Tyr-440. Disordered regions lie at residues 459–590 (EDKQ…PTYA) and 634–682 (FPAA…ELLR). A phosphoserine mark is found at Ser-466, Ser-470, and Ser-475. A compositionally biased stretch (polar residues) spans 467-478 (LGESPRTLSPTP). Residue Thr-477 is modified to Phosphothreonine. Ser-479 bears the Phosphoserine mark. Tyr-483 bears the Phosphotyrosine mark. Polar residues predominate over residues 493-518 (RSTSQGSINSPVYSRHSYTPTTSRSP). Phosphoserine is present on residues Ser-496, Ser-499, and Ser-502. A compositionally biased stretch (low complexity) spans 536–546 (PLRTSSFSSTH). A phosphoserine mark is found at Ser-582 and Ser-671. Positions 673–723 (REEDEEELLRRRQLQEEQLMKLNSGLGQLILKEEMEKESRERASLASRYDS) form a coiled coil. Residue Lys-704 forms a Glycyl lysine isopeptide (Lys-Gly) (interchain with G-Cter in SUMO2) linkage. The disordered stretch occupies residues 713–748 (ERASLASRYDSPLHSASHAPSSKTSSLPGYGKNGLH). Phosphoserine occurs at positions 723, 738, 760, and 789. Residues 724 to 738 (PLHSASHAPSSKTSS) show a composition bias toward low complexity. An HP domain is found at 793–861 (MLEPKIFPYE…NDMKKKAKLF (69 aa)).

Binds F-actin. Interacts with ABRA. As to expression, isoform 1 is detected in adult retina, where it is highly expressed in the ganglion layer. Detected in rod inner segment. Isoform 2 is highly expressed in adult retina, brain, kidney and heart. Isoform 3 is highly expressed in adult retina, brain, kidney, liver, skeletal muscle, spleen and heart. Detected in embryonic retina, brain, spinal cord, peripheral sensory ganglia and thymus.

It localises to the cytoplasm. It is found in the cytoskeleton. In terms of biological role, may act as scaffold protein. May play a role in the development of the retina. Has been suggested to play a role in axon guidance. The chain is Actin-binding LIM protein 1 (Ablim1) from Mus musculus (Mouse).